Here is a 435-residue protein sequence, read N- to C-terminus: ATP-dependent protease ATPase subunit HslU (435 aa).

ATP-binding positions include Ile18, 60 to 65 (GVGKTE), Asp248, Glu313, and Arg385.

It belongs to the ClpX chaperone family. HslU subfamily. In terms of assembly, a double ring-shaped homohexamer of HslV is capped on each side by a ring-shaped HslU homohexamer. The assembly of the HslU/HslV complex is dependent on binding of ATP.

The protein resides in the cytoplasm. In terms of biological role, ATPase subunit of a proteasome-like degradation complex; this subunit has chaperone activity. The binding of ATP and its subsequent hydrolysis by HslU are essential for unfolding of protein substrates subsequently hydrolyzed by HslV. HslU recognizes the N-terminal part of its protein substrates and unfolds these before they are guided to HslV for hydrolysis. The protein is ATP-dependent protease ATPase subunit HslU of Ruegeria pomeroyi (strain ATCC 700808 / DSM 15171 / DSS-3) (Silicibacter pomeroyi).